A 321-amino-acid polypeptide reads, in one-letter code: Lipoyl synthase (321 aa).

[4Fe-4S] cluster-binding residues include cysteine 68, cysteine 73, cysteine 79, cysteine 94, cysteine 98, cysteine 101, and serine 308. Residues 80–297 (FNHGTATFMI…KAYADEIGFT (218 aa)) enclose the Radical SAM core domain.

Belongs to the radical SAM superfamily. Lipoyl synthase family. Requires [4Fe-4S] cluster as cofactor.

The protein resides in the cytoplasm. It carries out the reaction [[Fe-S] cluster scaffold protein carrying a second [4Fe-4S](2+) cluster] + N(6)-octanoyl-L-lysyl-[protein] + 2 oxidized [2Fe-2S]-[ferredoxin] + 2 S-adenosyl-L-methionine + 4 H(+) = [[Fe-S] cluster scaffold protein] + N(6)-[(R)-dihydrolipoyl]-L-lysyl-[protein] + 4 Fe(3+) + 2 hydrogen sulfide + 2 5'-deoxyadenosine + 2 L-methionine + 2 reduced [2Fe-2S]-[ferredoxin]. It functions in the pathway protein modification; protein lipoylation via endogenous pathway; protein N(6)-(lipoyl)lysine from octanoyl-[acyl-carrier-protein]: step 2/2. Catalyzes the radical-mediated insertion of two sulfur atoms into the C-6 and C-8 positions of the octanoyl moiety bound to the lipoyl domains of lipoate-dependent enzymes, thereby converting the octanoylated domains into lipoylated derivatives. This Pseudoalteromonas translucida (strain TAC 125) protein is Lipoyl synthase.